A 255-amino-acid chain; its full sequence is CD320 antigen (255 aa).

The signal sequence occupies residues 1 to 29 (MNGWVARGLARRAAALGLGLRVLLCFGLC). Topologically, residues 30-203 (LEIAPTPIQT…SVQSGNRNVY (174 aa)) are extracellular. LDL-receptor class A domains lie at 52-89 (SCPP…EECG) and 120-157 (SCPE…LGCG). Cystine bridges form between Cys-53/Cys-66, Cys-60/Cys-79, Cys-73/Cys-88, Cys-121/Cys-134, Cys-128/Cys-147, and Cys-141/Cys-156. Ca(2+)-binding residues include Trp-71, Asp-74, Asp-76, Asp-78, Asp-84, and Glu-85. The Ca(2+) site is built by Trp-139, Asp-142, His-144, Asp-146, Asp-152, and Glu-153. N-linked (GlcNAc...) asparagine glycans are attached at residues Asn-177 and Asn-183. The chain crosses the membrane as a helical span at residues 204–224 (GIIAAVAVLSISLAAGILFAL). Residues 225 to 255 (SRLCAQGCLAPLGLLVSMKGSLQPEKKTSVL) lie on the Cytoplasmic side of the membrane.

As to quaternary structure, interacts (via LDL-receptor class A domains) with TCN2.

It localises to the cell membrane. Functionally, receptor for transcobalamin saturated with cobalamin (TCbl). Plays an important role in cobalamin uptake. Plasma membrane protein that is expressed on follicular dendritic cells (FDC) and mediates interaction with germinal center B cells. Functions as a costimulator to promote B cell responses to antigenic stimuli; promotes B cell differentiation and proliferation. Germinal center-B (GC-B) cells differentiate into memory B-cells and plasma cells (PC) through interaction with T-cells and follicular dendritic cells (FDC). CD320 augments the proliferation of PC precursors generated by IL-10. In Bos taurus (Bovine), this protein is CD320 antigen (CD320).